The sequence spans 130 residues: UPF0102 protein RSc3265 (130 aa).

Belongs to the UPF0102 family.

The polypeptide is UPF0102 protein RSc3265 (Ralstonia nicotianae (strain ATCC BAA-1114 / GMI1000) (Ralstonia solanacearum)).